Here is a 25-residue protein sequence, read N- to C-terminus: Putative cytochrome c4 (25 aa).

A disordered region spans residues 1 to 25 (QEDIEAGKQKSATCTACHGQEGNST). The heme site is built by Cys-14 and Cys-17.

In terms of processing, binds 2 heme groups per subunit.

It localises to the periplasm. Functionally, diheme, high potential cytochrome c believed to be an intermediate electron donor to terminal oxidation systems. This chain is Putative cytochrome c4, found in Aliivibrio fischeri (Vibrio fischeri).